We begin with the raw amino-acid sequence, 302 residues long: Protoheme IX farnesyltransferase 2 (302 aa).

The next 9 helical transmembrane spans lie at 14 to 34 (IIFGNLISAAGGFLLAAQGSV), 36 to 56 (WWLLAATVVGLSLVVASGCAI), 85 to 105 (AALAHGVVLGLAGFALLWFCT), 108 to 128 (LATGCVLFGFVIYVGVYSLYM), 133 to 153 (VYGTLVGSLSGAVPPVAGYCA), 163 to 183 (AILLLMFSLWQMPHSYAIAIF), 209 to 229 (IVLYILAFAAATVMLVFGGYA), 230 to 250 (GYGYLAVAVATSLWWLKMALS), and 264 to 284 (QVFFFSIITITSLSVMMAVDG).

Belongs to the UbiA prenyltransferase family. Protoheme IX farnesyltransferase subfamily.

The protein resides in the cell inner membrane. It catalyses the reaction heme b + (2E,6E)-farnesyl diphosphate + H2O = Fe(II)-heme o + diphosphate. It functions in the pathway porphyrin-containing compound metabolism; heme O biosynthesis; heme O from protoheme: step 1/1. Functionally, converts heme B (protoheme IX) to heme O by substitution of the vinyl group on carbon 2 of heme B porphyrin ring with a hydroxyethyl farnesyl side group. This is Protoheme IX farnesyltransferase 2 from Chromobacterium violaceum (strain ATCC 12472 / DSM 30191 / JCM 1249 / CCUG 213 / NBRC 12614 / NCIMB 9131 / NCTC 9757 / MK).